A 1144-amino-acid chain; its full sequence is Alpha-mannosidase 2 (1144 aa).

The Cytoplasmic segment spans residues 1–5 (MKLSR). A helical; Signal-anchor for type II membrane protein transmembrane segment spans residues 6 to 26 (QFTVFGSAIFCVVIFSLYLML). Over 27–1144 (DRGHLDYPRN…EISTFRIQLR (1118 aa)) the chain is Lumenal. A glycan (N-linked (GlcNAc...) asparagine) is linked at N78. Phosphoserine occurs at positions 80 and 82. N-linked (GlcNAc...) asparagine glycosylation occurs at N93. Zn(2+) contacts are provided by H175, D177, D289, and H569. D289 functions as the Nucleophile in the catalytic mechanism. An N-linked (GlcNAc...) asparagine glycan is attached at N1125.

The protein belongs to the glycosyl hydrolase 38 family. Homodimer; disulfide-linked. Zn(2+) is required as a cofactor. Post-translationally, glycosylated.

It localises to the golgi apparatus membrane. It catalyses the reaction N(4)-{beta-D-GlcNAc-(1-&gt;2)-alpha-D-Man-(1-&gt;3)-[alpha-D-Man-(1-&gt;3)-[alpha-D-Man-(1-&gt;6)]-alpha-D-Man-(1-&gt;6)]-beta-D-Man-(1-&gt;4)-beta-D-GlcNAc-(1-&gt;4)-beta-D-GlcNAc}-L-asparaginyl-[protein] + 2 H2O = 2 alpha-D-mannopyranose + an N(4)-{beta-D-GlcNAc-(1-&gt;2)-alpha-D-Man-(1-&gt;3)-[alpha-D-Man-(1-&gt;6)]-beta-D-Man-(1-&gt;4)-beta-D-GlcNAc-(1-&gt;4)-beta-D-GlcNAc}-L-asparaginyl-[protein]. It participates in protein modification; protein glycosylation. In terms of biological role, catalyzes the first committed step in the biosynthesis of complex N-glycans. It controls conversion of high mannose to complex N-glycans; the final hydrolytic step in the N-glycan maturation pathway. The sequence is that of Alpha-mannosidase 2 (MAN2A1) from Homo sapiens (Human).